Here is a 206-residue protein sequence, read N- to C-terminus: Cytochrome c (206 aa).

The next 3 membrane-spanning stretches (helical) occupy residues 10–30 (IALA…VSFL), 49–69 (FMGW…LGKM), and 76–96 (KWFL…FLSL). Heme contacts are provided by cysteine 152, cysteine 155, histidine 156, and methionine 182.

Monomer. Component of the photosynthetic reaction center composed of protein subunits PscA, PscC, PscB and PscD. The reaction center interacts with FmoA (which forms the Fenna-Matthews-Olson (FMO) complex). The reaction center/FmoA complex has two PscA subunits, one PscB and one PscD subunit, probably two FmoA complexes and at least one PscC subunit. Binds 1 heme group per subunit.

Its subcellular location is the cell inner membrane. Functionally, monoheme cytochrome which is the immediate electron donor to P840 of the photosynthetic reaction center complex. The protein is Cytochrome c (pscC) of Chlorobaculum tepidum (strain ATCC 49652 / DSM 12025 / NBRC 103806 / TLS) (Chlorobium tepidum).